The chain runs to 165 residues: MDIAHDLQSIGAQEQALVFPHFDPARAWALGNRMHALATARGHAIAIDIVTFGQPLFYAALAGATPDNADWVRRKRNVVAHFRRSSYAIGLRMQQAGASLADKHGLPLSDYSPHGGSFPLTVAGAGVIGSITASGLPQRADHEFVVEALCAELGQDYAALALARS.

The protein belongs to the UPF0303 family.

The sequence is that of UPF0303 protein BamMC406_1480 from Burkholderia ambifaria (strain MC40-6).